Reading from the N-terminus, the 356-residue chain is Phosphoribosylformylglycinamidine cyclo-ligase (356 aa).

This sequence belongs to the AIR synthase family.

It is found in the cytoplasm. It catalyses the reaction 2-formamido-N(1)-(5-O-phospho-beta-D-ribosyl)acetamidine + ATP = 5-amino-1-(5-phospho-beta-D-ribosyl)imidazole + ADP + phosphate + H(+). It participates in purine metabolism; IMP biosynthesis via de novo pathway; 5-amino-1-(5-phospho-D-ribosyl)imidazole from N(2)-formyl-N(1)-(5-phospho-D-ribosyl)glycinamide: step 2/2. In Desulfotalea psychrophila (strain LSv54 / DSM 12343), this protein is Phosphoribosylformylglycinamidine cyclo-ligase.